The following is a 330-amino-acid chain: Agamous-like MADS-box protein AGL75 (330 aa).

The MADS-box domain occupies 19 to 61; it reads TSLSNRLETIFKKASELCTLCDIEACVIYYGPDGELKTWPKEK.

Interacts with MEE14/CBP1.

Its subcellular location is the nucleus. Its function is as follows. Probable transcription factor that may function in the maintenance of the proper function of the central cell in pollen tube attraction. This Arabidopsis thaliana (Mouse-ear cress) protein is Agamous-like MADS-box protein AGL75.